Reading from the N-terminus, the 637-residue chain is MSLQCSSRSLCRGGGGSRNFSSGSAGLVSFQRRSTSSSMRRSGGGGGGRFSGGGFCGSSGSGFGSKSLMNLGGGRSISKSVAGGGGSFCGGFGGGSYGGGGFGGGSYGGGGFGGGSFGGGGFGGSGFGGGLGGGGGFGSGGGFGGGRFGSMGPVCPPGGIQEVTINQSLLQPLNVEVDPQIQKVKSQEREQIKSLNDKFASFIDKVRFLEQQNQVLQTKWELLQQVDTTTRTQNLDPFFENYISILRRKVDSLKSDQSRMDSELKNMQDLVEEYRTKYEDEINKRTNAENEFVTIKKDVDSAYMTKVELQAKADALQQDIDFFSALYQMEMSQMQTQISETNVVLSMDNNRSLDLDGIISEVKAQYDSICQRSKAEAETFYQSKYEELQITAGKHGDSVRNTKMEISELNRMIQRLRSEIDGCKKQISQIQQNINDAEQRGEKALKDAQNKLNEIEDALSQCKEDLARLLRDFQELMNTKLALDMEIATYKKLLEGEEIRMSGECTPNVSVSVSTSHTSMSGSSSRGGGSGGGRYGGGGSYGGGSGGGSYGGSSGGGGSGGSYGGGSGGGSYGGGSGGGSSGSHRGGSGGGGGSSGGSYGGSSGGGRGGSSSGGGGVKSSGSSTVKFVSTSYSRGTK.

The tract at residues 1–187 (MSLQCSSRSL…DPQIQKVKSQ (187 aa)) is head. At Arg-12 the chain carries Omega-N-methylarginine. Residues Ser-21 and Ser-24 each carry the phosphoserine modification. Arg-49 is modified (omega-N-methylarginine). Ser-67 carries the post-translational modification Phosphoserine. A coiled-coil region spans residues 180–328 (QIQKVKSQER…DIDFFSALYQ (149 aa)). Residues 188–223 (EREQIKSLNDKFASFIDKVRFLEQQNQVLQTKWELL) form a coil 1A region. Positions 188-501 (EREQIKSLND…KLLEGEEIRM (314 aa)) constitute an IF rod domain. The interval 224 to 243 (QQVDTTTRTQNLDPFFENYI) is linker 1. The coil 1B stretch occupies residues 244–334 (SILRRKVDSL…ALYQMEMSQM (91 aa)). Lys-284 bears the N6,N6-dimethyllysine mark. The linker 12 stretch occupies residues 335 to 358 (QTQISETNVVLSMDNNRSLDLDGI). Ser-352 is subject to Phosphoserine. The segment at 359–497 (ISEVKAQYDS…ATYKKLLEGE (139 aa)) is coil 2. Positions 397-483 (DSVRNTKMEI…QELMNTKLAL (87 aa)) form a coiled coil. The tail stretch occupies residues 498 to 637 (EIRMSGECTP…VSTSYSRGTK (140 aa)). 2 disordered regions span residues 505–533 (CTPNVSVSVSTSHTSMSGSSSRGGGSGGG) and 563–637 (YGGG…RGTK). The segment covering 509–524 (VSVSVSTSHTSMSGSS) has biased composition (low complexity). Residues Arg-526, Arg-585, and Arg-607 each carry the omega-N-methylarginine modification. Gly residues predominate over residues 563–618 (YGGGSGGGSYGGGSGGGSSGSHRGGSGGGGGSSGGSYGGSSGGGRGGSSSGGGGVK). Over residues 624-637 (TVKFVSTSYSRGTK) the composition is skewed to polar residues.

Belongs to the intermediate filament family. Heterotetramer of two type I and two type II keratins. Heterodimer with KRT10. Two heterodimers of KRT1 and KRT10 form a heterotetramer. Forms a heterodimer with KRT14; the interaction is more abundant in the absence of KRT5. Interacts with PLEC isoform 1C, when in a heterodimer with KRT10. Interacts with ITGB1 in the presence of RACK1 and SRC, and with RACK1. Interacts with C1QBP; the association represents a cell surface kininogen receptor. Interacts with EPPK1; interaction is dependent of higher-order structure of intermediate filament. Undergoes deimination of some arginine residues (citrullination). Expressed in the infundibular regions of the ear, the interfollicular epidermis of the back, in the interscale regions containing hair follicles in the tail, and in the soles of the footpads (at protein level).

The protein localises to the cell membrane. Its subcellular location is the cytoplasm. May regulate the activity of kinases such as PKC and SRC via binding to integrin beta-1 (ITB1) and the receptor of activated protein C kinase 1 (RACK1). In complex with C1QBP is a high affinity receptor for kininogen-1/HMWK. This is Keratin, type II cytoskeletal 1 (Krt1) from Mus musculus (Mouse).